A 115-amino-acid polypeptide reads, in one-letter code: MKSVLLFGVLLVTLFSYSSAEMLDDFDQADEDELLSLIEKEEARAKECTPRFYDCSHDRHSCCRSELFKDVCTCFYPEGGDNEVCTCQQPKHLKYMEKAAGKAKKFGGKIKKWFG.

A signal peptide spans Met1 to Ala20. Positions Glu21–Arg44 are excised as a propeptide. Cystine bridges form between Cys48–Cys63, Cys55–Cys72, Cys62–Cys87, and Cys74–Cys85.

Belongs to the neurotoxin 19 (CSTX) family. 01 subfamily. In terms of tissue distribution, expressed by the venom gland.

It is found in the secreted. The polypeptide is U3-lycotoxin-Ls1k (Lycosa singoriensis (Wolf spider)).